An 861-amino-acid chain; its full sequence is Integrator complex subunit 6-like (861 aa).

The VWFA domain occupies 3-227 (ILLFLIDTSA…QCLESLVQKV (225 aa)). Serine 617 is modified (phosphoserine).

The chain is Integrator complex subunit 6-like (Ints6l) from Mus musculus (Mouse).